The primary structure comprises 100 residues: Urease subunit gamma (100 aa).

It belongs to the urease gamma subunit family. As to quaternary structure, heterotrimer of UreA (gamma), UreB (beta) and UreC (alpha) subunits. Three heterotrimers associate to form the active enzyme.

The protein resides in the cytoplasm. It catalyses the reaction urea + 2 H2O + H(+) = hydrogencarbonate + 2 NH4(+). The protein operates within nitrogen metabolism; urea degradation; CO(2) and NH(3) from urea (urease route): step 1/1. The polypeptide is Urease subunit gamma (Alcanivorax borkumensis (strain ATCC 700651 / DSM 11573 / NCIMB 13689 / SK2)).